Here is a 562-residue protein sequence, read N- to C-terminus: MVASGFLLIASFMVVLFVLSRPLGGFLARLIEGEPFSALQKVEAGLWRCSGVKNAEMNGWQYALAILCFNLLGIVLLFVLLMTQGSLPLNPEHLPGMSWHLALNTAVSFVTNTNWQAYSGENTLSYLSQMAGLTVQNFLSAATGIAVAFALIRAFARHSATTLGNAWVDLVRITLYVLLPIALIIALIFVSQGVLQNLDGYLHITTLEGVQQTLPMGPVASQEAIKVLGTNGGGFFGANSAHPFENPTAFSNFVQMLAIFLIPCALCFAFGQVVGDNRQGHALIWAMSLIFIVAVVVVMYAELAGNPHLSPLGADSNSNMEGKESRFGILATSLYAVVTTAASCGAVNAMHDSFTALGGMIPLWLMQIGEVVFGGVGSGLYGMLLFVLLTVFIAGLMIGRTPEYLGKKIDVFDMKMTALAILVTPTIVLLGTALALCTEAGRAGILNPGAHGFSEVLYAFSSAANNNGSAFAGLSVNTPFYNLLLAAAMFIGRFGVILPVLAIASSLVAKKRQPAGNGTLPTGGPLFIGLLIGTVLLVGALTFIPALALGPVAEHLQVWLAH.

Transmembrane regions (helical) follow at residues 6–26, 62–82, 132–152, 175–195, 253–273, 283–303, 327–347, 356–376, 379–399, 416–436, 483–503, and 526–546; these read FLLI…LGGF, YALA…VLLM, GLTV…FALI, LYVL…QGVL, FVQM…FGQV, LIWA…YAEL, FGIL…CGAV, ALGG…FGGV, GLYG…LMIG, MTAL…ALAL, LLLA…VLAI, and LFIG…FIPA.

This sequence belongs to the KdpA family. The system is composed of three essential subunits: KdpA, KdpB and KdpC.

The protein resides in the cell inner membrane. Functionally, part of the high-affinity ATP-driven potassium transport (or Kdp) system, which catalyzes the hydrolysis of ATP coupled with the electrogenic transport of potassium into the cytoplasm. This subunit binds the periplasmic potassium ions and delivers the ions to the membrane domain of KdpB through an intramembrane tunnel. The protein is Potassium-transporting ATPase potassium-binding subunit of Yersinia pseudotuberculosis serotype IB (strain PB1/+).